A 626-amino-acid chain; its full sequence is Myelin-associated glycoprotein (626 aa).

The N-terminal stretch at 1-19 is a signal peptide; it reads MIFLTTLPLFWIMISASRG. The interaction with RTN4R and RTN4RL2 stretch occupies residues 20–325; that stretch reads GHWGAWMPSS…RTVELSVMYA (306 aa). Residues 20-516 lie on the Extracellular side of the membrane; sequence GHWGAWMPSS…HRLMWAKIGP (497 aa). Residues 22–120 form the Ig-like V-type domain; that stretch reads WGAWMPSSIS…LGGKYYFRGD (99 aa). Disulfide bonds link C37–C165, C42–C100, and C159–C217. Residue 65-67 coordinates a ganglioside GT1b (d18:1(4E)); that stretch reads YPK. Residue N99 is glycosylated (N-linked (GlcNAc...) asparagine). Residues R118 and 124–128 each bind a ganglioside GT1b (d18:1(4E)); that span reads YNQYT. Ig-like C2-type domains are found at residues 139–237, 241–325, 327–412, and 413–508; these read NTPN…LDVK, VIVE…VMYA, WKPT…VEFA, and PIIL…GAHR. N-linked (GlcNAc...) asparagine glycans are attached at residues N223 and N246. Residues C261 and C305 are joined by a disulfide bond. Residues N315 and N332 are each glycosylated (N-linked (GlcNAc...) asparagine). A disulfide bridge links C347 with C392. N406 carries an N-linked (GlcNAc...) asparagine glycan. 2 cysteine pairs are disulfide-bonded: C421–C430 and C432–C488. 2 N-linked (GlcNAc...) asparagine glycosylation sites follow: N450 and N454. Residues 517-536 traverse the membrane as a helical segment; sequence VGAVVAFAILIAIVCYITQT. Residue C531 is the site of S-palmitoyl cysteine attachment. Residues 537–626 are Cytoplasmic-facing; the sequence is RRKKNVTESP…LAEYAEIRVK (90 aa). 3 positions are modified to phosphoserine: S545, S547, and S549. Residues 577 to 626 form a required for normal axon myelination in the central nervous system region; sequence LGSERRLLGLRGEPPELDLSYSHSDLGKRPTKDSYTLTEELAEYAEIRVK. Residues 581-608 form a disordered region; sequence RRLLGLRGEPPELDLSYSHSDLGKRPTK.

This sequence belongs to the immunoglobulin superfamily. SIGLEC (sialic acid binding Ig-like lectin) family. As to quaternary structure, monomer and homodimer. Interacts (via the first three N-terminal Ig-like domains) with RTN4R and RTN4RL2. Interacts with isoform 2 of BSG. N-glycosylated. In terms of processing, phosphorylated on tyrosine residues. Post-translationally, ubiquitinated, leading to proteasomal degradation. Detected in myelin. Detected in olfactory bulb and throughout the brain (at protein level). Detected in brain.

Its subcellular location is the cell membrane. The protein localises to the membrane raft. Functionally, adhesion molecule that mediates interactions between myelinating cells and neurons by binding to neuronal sialic acid-containing gangliosides and to the glycoproteins RTN4R and RTN4RL2. Not required for initial myelination, but seems to play a role in the maintenance of normal axon myelination. Protects motoneurons against apoptosis, also after injury; protection against apoptosis is probably mediated via interaction with neuronal RTN4R and RTN4RL2. Required to prevent degeneration of myelinated axons in adults; this probably depends on binding to gangliosides on the axon cell membrane. Negative regulator of neurite outgrowth; in dorsal root ganglion neurons the inhibition is mediated primarily via binding to neuronal RTN4R or RTN4RL2 and to a lesser degree via binding to neuronal gangliosides. In cerebellar granule cells the inhibition is mediated primarily via binding to neuronal gangliosides. In sensory neurons, inhibition of neurite extension depends only partially on RTN4R, RTN4RL2 and gangliosides. Inhibits axon longitudinal growth. Inhibits axon outgrowth by binding to RTN4R. Preferentially binds to alpha-2,3-linked sialic acid. Binds ganglioside Gt1b. The chain is Myelin-associated glycoprotein (Mag) from Rattus norvegicus (Rat).